The primary structure comprises 103 residues: Large ribosomal subunit protein uL24 (103 aa).

This sequence belongs to the universal ribosomal protein uL24 family. As to quaternary structure, part of the 50S ribosomal subunit.

In terms of biological role, one of two assembly initiator proteins, it binds directly to the 5'-end of the 23S rRNA, where it nucleates assembly of the 50S subunit. One of the proteins that surrounds the polypeptide exit tunnel on the outside of the subunit. The protein is Large ribosomal subunit protein uL24 of Dehalococcoides mccartyi (strain ATCC BAA-2100 / JCM 16839 / KCTC 5957 / BAV1).